Here is a 185-residue protein sequence, read N- to C-terminus: AP-3 complex subunit sigma (185 aa).

Belongs to the adaptor complexes small subunit family. Adaptor protein complex 3 (AP-3) is a heterotetramer composed of 2 large adaptins (APL5 and APL6), a medium adaptin (APM3) and a small adaptin (APS3).

The protein resides in the golgi apparatus. It localises to the cytoplasmic vesicle membrane. Part of the AP-3 complex, an adaptor-related complex which is not clathrin-associated. The complex is associated with the Golgi region as well as more peripheral structures. It facilitates the budding of vesicles from the Golgi membrane and may be directly involved in trafficking to the vacuole. The sequence is that of AP-3 complex subunit sigma (APS3) from Eremothecium gossypii (strain ATCC 10895 / CBS 109.51 / FGSC 9923 / NRRL Y-1056) (Yeast).